Reading from the N-terminus, the 459-residue chain is MMPFSVLQVKRLQLELITPAKPTLQEAKFLSDIDDQEGLRFQVPVIMCYKDNPSLNKNCNPVKVIREALSRALVYYYPLAGRLKEGPNRKLMVDCNGEGILFVEASADVTLEQLGDKILPPCPLLEEFLFNFPGSDGIIGCPLLLVQVTCLTCGGFILALRVNHTMCDAPGLLLFLTAIAEMARGAHAPSILPVWERELLFSRDPPRITCAHHEYEDVIDHSDGLYASSNQSNMVQRSFYFGAKEMRVLRKQIPPHLISTCSTFDLITACLWKCRTLALNINPKEAVRVSCIVNARGKHNNVRLPLGYYGNAFAFPAAISKAEPLCKNPLGYALELVKKAKATMNEEYLRSVADLLVLRGRPQYSSTGSYLIVSDNTRAGFGDVNFGWGQPVFAGPAKALDLISFYVQHKNNTEDGILVPMCLPSSAMERFQQELERITQEPKEDICNNLRSTRIMSMM.

Active-site proton acceptor residues include histidine 164 and asparagine 385.

It belongs to the plant acyltransferase family. In terms of tissue distribution, highly expressed in the cortex and skin of ripe fruit.

Its function is as follows. Involved in the biosynthesis of volatile esters which confer ripe apple fruit flavor. Alcohol acyl transferase that can use a wide range of alcohols as substrate to produce esters. The sequence is that of Alcohol acyl transferase 2 from Malus domestica (Apple).